The sequence spans 146 residues: Hemoglobin subunit beta (146 aa).

In terms of domain architecture, Globin spans 2–146 (HWTAEEKQLI…VAHALARKYH (145 aa)). Residues His-63 and His-92 each coordinate heme b.

The protein belongs to the globin family. In terms of assembly, heterotetramer of two alpha chains and two beta chains. Red blood cells.

Its function is as follows. Involved in oxygen transport from the lung to the various peripheral tissues. The polypeptide is Hemoglobin subunit beta (HBB) (Branta canadensis (Canada goose)).